Here is a 369-residue protein sequence, read N- to C-terminus: ERCC4 domain-containing protein EP364R (369 aa).

An ERCC4 domain is found at 3–101 (FLVADHREHH…QLYFFVEGPA (99 aa)). The disordered stretch occupies residues 339–369 (PLHDVSDDASSDASSPTGHQTLSKEMSLNTA). The segment covering 354-369 (PTGHQTLSKEMSLNTA) has biased composition (polar residues).

The protein belongs to the asfivirus EP364R family.

Plays a role in the inhibition of type I interferon signaling pathway. Mechanistically, specifically interacts with 2',3'-cGAMP and cleaves it via its phosphodiesterase activity. In turn, prevents 2',3'-cGAMP interaction with host ER-resident STING1 leading to inhibition of downstream signaling pathway and type I interferon production. This chain is ERCC4 domain-containing protein EP364R, found in African swine fever virus (isolate Tick/South Africa/Pretoriuskop Pr4/1996) (ASFV).